The primary structure comprises 259 residues: Sesquipedalian-2 (259 aa).

A PH domain is found at 17–121; it reads PADHTGFLRS…WVKALSRASF (105 aa). The stretch at 124–150 forms a coiled coil; that stretch reads MRLVVRELESQLQDARQSLALHRCASQ. Positions 155–178 are disordered; that stretch reads SCSKSQAPDHRAPDPENGHFLPRD. Residues 161 to 178 are compositionally biased toward basic and acidic residues; it reads APDHRAPDPENGHFLPRD. Residues 223–235 carry the F&amp;H motif; that stretch reads CFSTLHDWYGKEI.

It belongs to the sesquipedalian family. As to quaternary structure, forms homodimers and heterodimers with PHETA1. Interacts with OCRL and INPP5B.

It is found in the early endosome. The protein resides in the recycling endosome. The protein localises to the golgi apparatus. It localises to the trans-Golgi network. Its subcellular location is the cytoplasmic vesicle. It is found in the clathrin-coated vesicle. Its function is as follows. Plays a role in endocytic trafficking. Required for receptor recycling from endosomes, both to the trans-Golgi network and the plasma membrane. This Mus musculus (Mouse) protein is Sesquipedalian-2.